A 353-amino-acid polypeptide reads, in one-letter code: tRNA-specific 2-thiouridylase MnmA 2 (353 aa).

Residues A9–S16 and M35 each bind ATP. Catalysis depends on C98, which acts as the Nucleophile. A disulfide bond links C98 and C194. G122 contacts ATP. The segment at K144–Q146 is interaction with tRNA. C194 acts as the Cysteine persulfide intermediate in catalysis. Residues R300–Y301 form an interaction with tRNA region.

The protein belongs to the MnmA/TRMU family.

The protein resides in the cytoplasm. It carries out the reaction S-sulfanyl-L-cysteinyl-[protein] + uridine(34) in tRNA + AH2 + ATP = 2-thiouridine(34) in tRNA + L-cysteinyl-[protein] + A + AMP + diphosphate + H(+). Functionally, catalyzes the 2-thiolation of uridine at the wobble position (U34) of tRNA, leading to the formation of s(2)U34. The chain is tRNA-specific 2-thiouridylase MnmA 2 from Clostridium botulinum (strain Langeland / NCTC 10281 / Type F).